The chain runs to 261 residues: Acetoacetate decarboxylase 2 (261 aa).

Lysine 116 serves as the catalytic Schiff-base intermediate with acetoacetate.

This sequence belongs to the ADC family.

It carries out the reaction acetoacetate + H(+) = acetone + CO2. In terms of biological role, catalyzes the conversion of acetoacetate to acetone and carbon dioxide. This chain is Acetoacetate decarboxylase 2, found in Mesorhizobium japonicum (strain LMG 29417 / CECT 9101 / MAFF 303099) (Mesorhizobium loti (strain MAFF 303099)).